The primary structure comprises 380 residues: DNA replication and repair protein RecF (380 aa).

30-37 serves as a coordination point for ATP; sequence GPNGFGKT.

It belongs to the RecF family.

It localises to the cytoplasm. Functionally, the RecF protein is involved in DNA metabolism; it is required for DNA replication and normal SOS inducibility. RecF binds preferentially to single-stranded, linear DNA. It also seems to bind ATP. The sequence is that of DNA replication and repair protein RecF from Mycobacterium sp. (strain KMS).